The sequence spans 476 residues: Inactive glucose-1-phosphate adenylyltransferase small subunit 2, chloroplastic (476 aa).

The transit peptide at 1–55 (MQISSSSFITKFTNLHMVRSTSDHHQWRHNYNLKQLFIPNLSVSNSQHLPLNQSV) directs the protein to the chloroplast.

This sequence belongs to the bacterial/plant glucose-1-phosphate adenylyltransferase family. Heterotetramer. As to expression, expressed at very low levels in leaves, inflorescences, fruits, and roots.

Its subcellular location is the plastid. The protein resides in the chloroplast. The polypeptide is Inactive glucose-1-phosphate adenylyltransferase small subunit 2, chloroplastic (Arabidopsis thaliana (Mouse-ear cress)).